The sequence spans 842 residues: Pentatricopeptide repeat-containing protein At3g23020 (842 aa).

Residues 40 to 61 (YVPGTHESDKGPQRSTRNGDRG) are disordered. The segment covering 45-59 (HESDKGPQRSTRNGD) has biased composition (basic and acidic residues). PPR repeat units lie at residues 186-220 (NVIH…GIKP), 221-255 (INST…GMQP), 256-290 (DEVT…ENKA), 297-331 (SSYT…GIVP), 332-362 (TTVT…MKLH), 366-400 (DTRT…GLKP), 401-435 (DPVS…NVEI), 436-470 (DEYT…GNMS), 474-500 (YSAN…CQEV), 504-538 (TVIE…GVTP), 539-573 (DKCT…GYVS), 574-608 (DCIP…NIEP), 609-643 (DVVV…GIPG), 644-674 (NSVI…LLQS), 682-712 (DVYT…MKQR), 716-750 (NEFT…KILT), 751-785 (DPLS…GIQP), and 786-820 (DDST…EIKR).

This sequence belongs to the PPR family. P subfamily.

The protein is Pentatricopeptide repeat-containing protein At3g23020 of Arabidopsis thaliana (Mouse-ear cress).